Consider the following 142-residue polypeptide: Hemoglobin subunit alpha-A (142 aa).

One can recognise a Globin domain in the interval 2–142 (VLSAADKTNV…VGAVLTAKYR (141 aa)). H59 lines the O2 pocket. H88 is a binding site for heme b.

The protein belongs to the globin family. In terms of assembly, heterotetramer of two alpha chains and two beta chains. In terms of tissue distribution, red blood cells.

Involved in oxygen transport from the lung to the various peripheral tissues. The chain is Hemoglobin subunit alpha-A (HBAA) from Cairina moschata (Muscovy duck).